The sequence spans 152 residues: Ribonuclease pancreatic beta-type (152 aa).

The N-terminal stretch at 1–25 is a signal peptide; that stretch reads MGLXKSFALFSLLVLVLGWVQPSLS. The tract at residues 25–53 is disordered; that stretch reads SGESRESSADKFKRQHMDPDSPSKSSPTY. Positions 27-45 are enriched in basic and acidic residues; it reads ESRESSADKFKRQHMDPDS. 2 residues coordinate substrate: Lys35 and Arg38. His40 (proton acceptor) is an active-site residue. Disulfide bonds link Cys54–Cys112, Cys68–Cys123, Cys86–Cys138, and Cys93–Cys100. Substrate contacts are provided by residues 69–73 and Lys94; that span reads KRVNT. His147 (proton donor) is an active-site residue.

Belongs to the pancreatic ribonuclease family. As to quaternary structure, monomer.

Its subcellular location is the secreted. It carries out the reaction an [RNA] containing cytidine + H2O = an [RNA]-3'-cytidine-3'-phosphate + a 5'-hydroxy-ribonucleotide-3'-[RNA].. The enzyme catalyses an [RNA] containing uridine + H2O = an [RNA]-3'-uridine-3'-phosphate + a 5'-hydroxy-ribonucleotide-3'-[RNA].. Functionally, endonuclease that catalyzes the cleavage of RNA on the 3' side of pyrimidine nucleotides. Acts on single-stranded and double-stranded RNA. This chain is Ribonuclease pancreatic beta-type, found in Rattus tiomanicus (Malayan field rat).